We begin with the raw amino-acid sequence, 201 residues long: Ras-related protein Rab-9A (201 aa).

N-acetylalanine is present on Ala-2. GDP is bound at residue Gly-17. GTP-binding residues include Gly-17, Val-18, Gly-19, Lys-20, Ser-21, Ser-22, Thr-34, His-38, and Thr-39. Residues Gly-19, Lys-20, Ser-21, and Ser-22 each contribute to the GDP site. Ser-21 contacts Mg(2+). The Switch 1 signature appears at 31–42; sequence KFDTQLFHTIGV. 2 residues coordinate Mg(2+): Thr-39 and Asp-62. The Switch 2 motif lies at 64–78; it reads AGQERFRSLRTPFYR. Positions 65, 124, 125, 127, 155, and 156 each coordinate GTP. GDP is bound by residues Asn-124, Lys-125, Asp-127, Ala-155, and Lys-156. Residue Ser-179 is modified to Phosphoserine. Phosphothreonine is present on Thr-187. Residues Cys-200 and Cys-201 are each lipidated (S-geranylgeranyl cysteine).

The protein belongs to the small GTPase superfamily. Rab family. Interacts (preferentially in its GTP-bound form) with GCC2 (via its GRIP domain). Interacts (GTP-bound form) with SGSM1; the GDP-bound form has much lower affinity for SGSM1. Interacts with SGSM2. The GTP-bound form but not the GDP-bound form interacts with HPS4 and BLOC-3 complex (heterodimer of HPS1 and HPS4) but does not interact with HPS1 alone. Interacts (GTP-bound form) with NDE1; two RAB9A-GTP molecules lie on the opposite sides of the NDE1 homodimer; the interaction leads to RAB9A-dynein motor tethering. Interacts (GTP-bound form) with NDEL1. Mg(2+) is required as a cofactor.

It is found in the cell membrane. Its subcellular location is the endoplasmic reticulum membrane. It localises to the golgi apparatus membrane. The protein localises to the late endosome. The protein resides in the cytoplasmic vesicle. It is found in the phagosome membrane. Its subcellular location is the phagosome. It localises to the cytoplasmic vesicle membrane. The protein localises to the melanosome. It catalyses the reaction GTP + H2O = GDP + phosphate + H(+). Its activity is regulated as follows. Regulated by guanine nucleotide exchange factors (GEFs) which promote the exchange of bound GDP for free GTP. Regulated by GTPase activating proteins (GAPs) which increase the GTP hydrolysis activity. Inhibited by GDP dissociation inhibitors (GDIs). Functionally, the small GTPases Rab are key regulators of intracellular membrane trafficking, from the formation of transport vesicles to their fusion with membranes. Rabs cycle between an inactive GDP-bound form and an active GTP-bound form that is able to recruit to membranes different sets of downstream effectors directly responsible for vesicle formation, movement, tethering and fusion. RAB9A is involved in the transport of proteins between the endosomes and the trans-Golgi network (TGN). Specifically uses NDE1/NDEL1 as an effector to interact with the dynein motor complex in order to control retrograde trafficking of RAB9-associated late endosomes to the TGN. Involved in the recruitment of SGSM2 to melanosomes and is required for the proper trafficking of melanogenic enzymes TYR, TYRP1 and DCT/TYRP2 to melanosomes in melanocytes. This Homo sapiens (Human) protein is Ras-related protein Rab-9A.